A 236-amino-acid polypeptide reads, in one-letter code: Phosphoribosylaminoimidazole-succinocarboxamide synthase (236 aa).

Belongs to the SAICAR synthetase family.

The catalysed reaction is 5-amino-1-(5-phospho-D-ribosyl)imidazole-4-carboxylate + L-aspartate + ATP = (2S)-2-[5-amino-1-(5-phospho-beta-D-ribosyl)imidazole-4-carboxamido]succinate + ADP + phosphate + 2 H(+). Its pathway is purine metabolism; IMP biosynthesis via de novo pathway; 5-amino-1-(5-phospho-D-ribosyl)imidazole-4-carboxamide from 5-amino-1-(5-phospho-D-ribosyl)imidazole-4-carboxylate: step 1/2. The sequence is that of Phosphoribosylaminoimidazole-succinocarboxamide synthase from Campylobacter concisus (strain 13826).